Reading from the N-terminus, the 619-residue chain is Dihydroxy-acid dehydratase (619 aa).

Aspartate 81 lines the Mg(2+) pocket. Cysteine 122 provides a ligand contact to [2Fe-2S] cluster. Mg(2+) is bound by residues aspartate 123 and lysine 124. The residue at position 124 (lysine 124) is an N6-carboxylysine. A [2Fe-2S] cluster-binding site is contributed by cysteine 201. Mg(2+) is bound at residue glutamate 496. Serine 522 acts as the Proton acceptor in catalysis.

It belongs to the IlvD/Edd family. As to quaternary structure, homodimer. Requires [2Fe-2S] cluster as cofactor. Mg(2+) is required as a cofactor.

The enzyme catalyses (2R)-2,3-dihydroxy-3-methylbutanoate = 3-methyl-2-oxobutanoate + H2O. It carries out the reaction (2R,3R)-2,3-dihydroxy-3-methylpentanoate = (S)-3-methyl-2-oxopentanoate + H2O. It participates in amino-acid biosynthesis; L-isoleucine biosynthesis; L-isoleucine from 2-oxobutanoate: step 3/4. It functions in the pathway amino-acid biosynthesis; L-valine biosynthesis; L-valine from pyruvate: step 3/4. Its function is as follows. Functions in the biosynthesis of branched-chain amino acids. Catalyzes the dehydration of (2R,3R)-2,3-dihydroxy-3-methylpentanoate (2,3-dihydroxy-3-methylvalerate) into 2-oxo-3-methylpentanoate (2-oxo-3-methylvalerate) and of (2R)-2,3-dihydroxy-3-methylbutanoate (2,3-dihydroxyisovalerate) into 2-oxo-3-methylbutanoate (2-oxoisovalerate), the penultimate precursor to L-isoleucine and L-valine, respectively. This Paracidovorax citrulli (strain AAC00-1) (Acidovorax citrulli) protein is Dihydroxy-acid dehydratase.